The primary structure comprises 325 residues: Beta-ketoacyl-[acyl-carrier-protein] synthase III (325 aa).

Active-site residues include Cys-119 and His-252. An ACP-binding region spans residues Gln-253–Arg-257. Residue Asn-282 is part of the active site.

It belongs to the thiolase-like superfamily. FabH family. In terms of assembly, homodimer.

It localises to the cytoplasm. It catalyses the reaction malonyl-[ACP] + acetyl-CoA + H(+) = 3-oxobutanoyl-[ACP] + CO2 + CoA. The protein operates within lipid metabolism; fatty acid biosynthesis. Its function is as follows. Catalyzes the condensation reaction of fatty acid synthesis by the addition to an acyl acceptor of two carbons from malonyl-ACP. Catalyzes the first condensation reaction which initiates fatty acid synthesis and may therefore play a role in governing the total rate of fatty acid production. Possesses both acetoacetyl-ACP synthase and acetyl transacylase activities. Its substrate specificity determines the biosynthesis of branched-chain and/or straight-chain of fatty acids. This is Beta-ketoacyl-[acyl-carrier-protein] synthase III from Paracidovorax citrulli (strain AAC00-1) (Acidovorax citrulli).